Reading from the N-terminus, the 285-residue chain is SLAM family member 8 (285 aa).

An N-terminal signal peptide occupies residues 1–22 (MVMRPLWSLLLWEALLPITVTG). At 23–233 (AQVLSKVGGS…AAPGKASYKD (211 aa)) the chain is on the extracellular side. The N-linked (GlcNAc...) asparagine glycan is linked to N85. The region spanning 128–215 (PVVQVFIAVE…PVSWDLATVT (88 aa)) is the Ig-like C2-type domain. C152 and C201 are oxidised to a cystine. Residues 234–254 (VLLVVVPVSLLLMLVTLFSAW) traverse the membrane as a helical segment. Residues 255–285 (HWCPCSGKKKKDVHADRVGPETENPLVQDLP) are Cytoplasmic-facing. The segment at 262–285 (KKKKDVHADRVGPETENPLVQDLP) is disordered.

In terms of tissue distribution, expressed in lymph node, spleen, thymus and bone marrow.

Its subcellular location is the membrane. Its function is as follows. May play a role in B-lineage commitment and/or modulation of signaling through the B-cell receptor. The protein is SLAM family member 8 (SLAMF8) of Homo sapiens (Human).